A 221-amino-acid polypeptide reads, in one-letter code: Secreted protein BARF1 (221 aa).

Positions Met1–Ala20 are cleaved as a signal peptide. Ig-like domains are found at residues Val21–Ser120 and Pro124–Ser220. N-linked (GlcNAc...) asparagine; by host glycosylation occurs at Asn95. Cysteines 146 and 201 form a disulfide.

As to quaternary structure, homohexamer. Interacts with human CSF1. Post-translationally, phosphorylated on serine and threonine by host.

It is found in the secreted. In terms of biological role, plays diverse functions in immunomodulation and oncogenicity, maybe by acting as a functional receptor for human CSF1. May inhibit interferon secretion from mononuclear cells. Exhibits oncogenic activity in vitro. This chain is Secreted protein BARF1, found in Epstein-Barr virus (strain B95-8) (HHV-4).